Reading from the N-terminus, the 905-residue chain is Probable cation-transporting ATPase F (905 aa).

3 helical membrane passes run 84 to 104 (EFVD…VGFI), 248 to 268 (FSKF…GVGL), and 283 to 303 (ALAV…TLAI). Aspartate 333 acts as the 4-aspartylphosphate intermediate in catalysis. Residues aspartate 643 and aspartate 647 each contribute to the Mg(2+) site. Transmembrane regions (helical) follow at residues 716–736 (ILAA…ILWI), 738–758 (MTTA…AGIM), 778–798 (TLLV…WELD), 808–828 (TAAL…CRSL), 842–862 (WIIL…YLPA), and 872–892 (IDIG…IVVA).

It belongs to the cation transport ATPase (P-type) (TC 3.A.3) family. Type IIA subfamily.

The protein localises to the cell membrane. The enzyme catalyses ATP + H2O = ADP + phosphate + H(+). The polypeptide is Probable cation-transporting ATPase F (ctpF) (Mycobacterium bovis (strain ATCC BAA-935 / AF2122/97)).